The sequence spans 712 residues: Polyribonucleotide nucleotidyltransferase (712 aa).

Positions 487 and 493 each coordinate Mg(2+). A KH domain is found at 554-613 (PKIITMTINPDKIRDVIGPSGKQINKIIEETGVKIDIEQDGTVFISSINQEMNDKAKKII). In terms of domain architecture, S1 motif spans 623–691 (GEIYEGKVKR…KQGRVNLSRK (69 aa)).

The protein belongs to the polyribonucleotide nucleotidyltransferase family. The cofactor is Mg(2+).

Its subcellular location is the cytoplasm. It catalyses the reaction RNA(n+1) + phosphate = RNA(n) + a ribonucleoside 5'-diphosphate. Functionally, involved in mRNA degradation. Catalyzes the phosphorolysis of single-stranded polyribonucleotides processively in the 3'- to 5'-direction. This is Polyribonucleotide nucleotidyltransferase from Bacillus cereus (strain AH187).